A 557-amino-acid polypeptide reads, in one-letter code: CTP synthase (557 aa).

Residues 1–267 (MAKFVFVTGG…CREVLDVLDL (267 aa)) are amidoligase domain. Serine 13 provides a ligand contact to CTP. Serine 13 serves as a coordination point for UTP. ATP contacts are provided by residues 14–19 (SIGKGI) and aspartate 71. Mg(2+) is bound by residues aspartate 71 and glutamate 141. Residues 148 to 150 (DIE), 188 to 193 (KTKPTQ), and lysine 224 contribute to the CTP site. Residues 188-193 (KTKPTQ) and lysine 224 contribute to the UTP site. Residues 292–534 (KVALVGKYVQ…IEAAQQRLPC (243 aa)) form the Glutamine amidotransferase type-1 domain. Glycine 354 is an L-glutamine binding site. Cysteine 381 (nucleophile; for glutamine hydrolysis) is an active-site residue. Residues 382–385 (LGMQ), glutamate 405, and arginine 462 each bind L-glutamine. Active-site residues include histidine 507 and glutamate 509. Residues 532-557 (LPCSPSEAMRQQNNSAAGSSHPSLQP) form a disordered region. The segment covering 540 to 557 (MRQQNNSAAGSSHPSLQP) has biased composition (polar residues).

Belongs to the CTP synthase family. Homotetramer.

It carries out the reaction UTP + L-glutamine + ATP + H2O = CTP + L-glutamate + ADP + phosphate + 2 H(+). The catalysed reaction is L-glutamine + H2O = L-glutamate + NH4(+). The enzyme catalyses UTP + NH4(+) + ATP = CTP + ADP + phosphate + 2 H(+). It functions in the pathway pyrimidine metabolism; CTP biosynthesis via de novo pathway; CTP from UDP: step 2/2. Its activity is regulated as follows. Allosterically activated by GTP, when glutamine is the substrate; GTP has no effect on the reaction when ammonia is the substrate. The allosteric effector GTP functions by stabilizing the protein conformation that binds the tetrahedral intermediate(s) formed during glutamine hydrolysis. Inhibited by the product CTP, via allosteric rather than competitive inhibition. In terms of biological role, catalyzes the ATP-dependent amination of UTP to CTP with either L-glutamine or ammonia as the source of nitrogen. Regulates intracellular CTP levels through interactions with the four ribonucleotide triphosphates. The chain is CTP synthase from Synechococcus sp. (strain CC9311).